Reading from the N-terminus, the 98-residue chain is Co-chaperonin GroES 3 (98 aa).

It belongs to the GroES chaperonin family. Heptamer of 7 subunits arranged in a ring. Interacts with the chaperonin GroEL.

Its subcellular location is the cytoplasm. Its function is as follows. Together with the chaperonin GroEL, plays an essential role in assisting protein folding. The GroEL-GroES system forms a nano-cage that allows encapsulation of the non-native substrate proteins and provides a physical environment optimized to promote and accelerate protein folding. GroES binds to the apical surface of the GroEL ring, thereby capping the opening of the GroEL channel. This is Co-chaperonin GroES 3 from Mesorhizobium japonicum (strain LMG 29417 / CECT 9101 / MAFF 303099) (Mesorhizobium loti (strain MAFF 303099)).